A 365-amino-acid polypeptide reads, in one-letter code: 3-dehydroquinate synthase (365 aa).

Residues 106–110, 130–131, Lys-142, Lys-151, and 169–172 each bind NAD(+); these read GVIGD, TT, and FFAT. 3 residues coordinate Zn(2+): Glu-184, His-247, and His-264.

The protein belongs to the sugar phosphate cyclases superfamily. Dehydroquinate synthase family. The cofactor is NAD(+). Requires Co(2+) as cofactor. It depends on Zn(2+) as a cofactor.

The protein localises to the cytoplasm. The catalysed reaction is 7-phospho-2-dehydro-3-deoxy-D-arabino-heptonate = 3-dehydroquinate + phosphate. The protein operates within metabolic intermediate biosynthesis; chorismate biosynthesis; chorismate from D-erythrose 4-phosphate and phosphoenolpyruvate: step 2/7. In terms of biological role, catalyzes the conversion of 3-deoxy-D-arabino-heptulosonate 7-phosphate (DAHP) to dehydroquinate (DHQ). This chain is 3-dehydroquinate synthase, found in Listeria monocytogenes serovar 1/2a (strain ATCC BAA-679 / EGD-e).